The primary structure comprises 647 residues: Threonine--tRNA ligase (647 aa).

The TGS domain maps to Met-1 to Thr-61. A catalytic region spans residues Asp-242–Pro-540. 3 residues coordinate Zn(2+): Cys-336, His-387, and His-517.

Belongs to the class-II aminoacyl-tRNA synthetase family. In terms of assembly, homodimer. Zn(2+) is required as a cofactor.

The protein resides in the cytoplasm. It carries out the reaction tRNA(Thr) + L-threonine + ATP = L-threonyl-tRNA(Thr) + AMP + diphosphate + H(+). In terms of biological role, catalyzes the attachment of threonine to tRNA(Thr) in a two-step reaction: L-threonine is first activated by ATP to form Thr-AMP and then transferred to the acceptor end of tRNA(Thr). Also edits incorrectly charged L-seryl-tRNA(Thr). This chain is Threonine--tRNA ligase, found in Streptococcus pneumoniae (strain ATCC 700669 / Spain 23F-1).